Consider the following 205-residue polypeptide: Fe/S biogenesis protein NfuA (205 aa).

Positions 162 and 165 each coordinate [4Fe-4S] cluster.

This sequence belongs to the NfuA family. Homodimer. [4Fe-4S] cluster serves as cofactor.

Functionally, involved in iron-sulfur cluster biogenesis. Binds a 4Fe-4S cluster, can transfer this cluster to apoproteins, and thereby intervenes in the maturation of Fe/S proteins. Could also act as a scaffold/chaperone for damaged Fe/S proteins. The protein is Fe/S biogenesis protein NfuA of Blochmanniella floridana.